Consider the following 255-residue polypeptide: RNA polymerase sigma-F factor (255 aa).

Residues 61–74 (DLFQIGCIGLLKSV) carry the Polymerase core binding motif. The segment at residues 221–240 (QSEVAERLGISQVQVSRLEK) is a DNA-binding region (H-T-H motif).

Belongs to the sigma-70 factor family. In terms of assembly, interacts transiently with the RNAP core.

Interaction with SpoIIAB inhibits sigma-F activity throughout the cell before the formation of the asymmetric septum; after septation the interaction is confined to the mother cell, and sigma-F activity is released in the prespore. Fin, a second, forespore-specific anti-sigma factor is induced in 2 successive waves by sigma-F and sigma-G, by antagonizing sigma-F it allows the switch to sigma-G factor and progression to the late sporulation development stages. Its function is as follows. Sigma factors are initiation factors that promote the attachment of RNA polymerase to specific initiation sites and are then released. This sigma factor is responsible for the expression of sporulation specific genes. Interaction with SpoIIAB inhibits sigma-F activity throughout the cell before the formation of the asymmetric septum; after septation the interaction is confined to the mother cell, and sigma F activity is released in the prespore. Responsible for expression of csfB (the anti-sigma-G factor Gin). Associates with the RNAP core only in stationary phase cells. The chain is RNA polymerase sigma-F factor (sigF) from Bacillus subtilis (strain 168).